The primary structure comprises 528 residues: MLAMAASAEETNRQSNAGRRSVISPSEAPPEAEQSDVYQAPPPGLKEWLFILILCSTQLFVQGAFGYILIPLHIVGQTFGQGPSEATRMTWHVGGYSLTVGTFILIAGKLGDLYGSKRILVLGWAWFGVWSVIGGCSAFTHSPVFFDTARALQGIGPALLLPNALAIAGRTYPPGKKKNMIFSAFAVAAPLGCFTAGVVGSVFAQYVWWPWVMWTYSIGCFIIAAVGLWVIPSDYPRCQKAATLQFDYIGSVLGVAGLLLLNISWNQAPIDGWSTPYVYVLLIGGFLVLGLFELQERRAPGIRSWINFAMCLLWIQQCSSRQGPSQGILPALATPYLMAVITSGWLMAIACAAFLGGCILQSTAPVEQSYWMNTFWSFVIMAWGMDISFPASTTILSDAVPVKHQGASASLVNTVINYSIAIGLGIAGTVEAEVSHQGVNQLRGYRAALWSSVGLAALAFGIALVFAVCTFQEQRSSRKSSQEREQRACIEGCILGLTLTPDREWERVELGRLLSHVSQTGGLRSQSV.

The segment at 1-37 is disordered; it reads MLAMAASAEETNRQSNAGRRSVISPSEAPPEAEQSDV. Transmembrane regions (helical) follow at residues 50 to 70, 91 to 111, 119 to 139, 149 to 169, 180 to 200, 211 to 231, and 241 to 261; these read FILILCSTQLFVQGAFGYILI, WHVGGYSLTVGTFILIAGKLG, ILVLGWAWFGVWSVIGGCSAF, ARALQGIGPALLLPNALAIAG, MIFSAFAVAAPLGCFTAGVVG, WVMWTYSIGCFIIAAVGLWVI, and AATLQFDYIGSVLGVAGLLLL. Asparagine 262 is a glycosylation site (N-linked (GlcNAc...) asparagine). The next 5 helical transmembrane spans lie at 272 to 292, 340 to 360, 375 to 395, 410 to 430, and 448 to 468; these read GWSTPYVYVLLIGGFLVLGLF, VITSGWLMAIACAAFLGGCIL, FWSFVIMAWGMDISFPASTTI, SLVNTVINYSIAIGLGIAGTV, and ALWSSVGLAALAFGIALVFAV.

Belongs to the major facilitator superfamily.

It is found in the cell membrane. Its function is as follows. Major facilitator superfamily transporter that confers resistance to azoles such as itraconazole. The chain is Major facilitator superfamily multidrug transporter mdr3 from Aspergillus fumigatus (strain ATCC MYA-4609 / CBS 101355 / FGSC A1100 / Af293) (Neosartorya fumigata).